An 842-amino-acid polypeptide reads, in one-letter code: Synaptonemal complex protein 2-like (842 aa).

4 disordered regions span residues Gly451–Gln473, Phe505–Val560, Ser619–Glu666, and Glu715–Val738. Basic and acidic residues-rich tracts occupy residues Thr458–Glu470 and Phe505–Leu525. Residues Asn543–Arg559 are compositionally biased toward basic residues. Composition is skewed to basic and acidic residues over residues Gly624–Ser633 and Arg643–Ser655.

The protein belongs to the SYCP2 family. As to expression, specifically expressed in oocytes.

It is found in the nucleus. The protein resides in the chromosome. The protein localises to the centromere. Its function is as follows. Oocyte-specific protein that localizes to centromeres at the dictyate stage and regulates the survival of primordial oocytes. This is Synaptonemal complex protein 2-like from Mus musculus (Mouse).